Here is a 315-residue protein sequence, read N- to C-terminus: Hydroxysteroid 11-beta-dehydrogenase 1-like protein (315 aa).

A signal peptide spans 1-15 (MKVLLLTGLGALFFA). NADP(+)-binding positions include 36–62 (GANAGVGEELAYHYARLGSHLVLTAHT), 87–88 (DM), and 114–116 (NHI). Ser-165 lines the substrate pocket. Tyr-178 functions as the Proton acceptor in the catalytic mechanism. NADP(+) is bound by residues 178–182 (YSAAK) and 211–217 (GLRDRAS). The interval 221-286 (AVRSSTSRPR…SKTEKNDGHL (66 aa)) is disordered. A compositionally biased stretch (basic and acidic residues) spans 277–286 (SKTEKNDGHL).

The protein belongs to the short-chain dehydrogenases/reductases (SDR) family. Highly expressed in the brain.

The protein resides in the secreted. It catalyses the reaction cortisone + NADPH + H(+) = cortisol + NADP(+). Unidirectional NADP(+)-dependent cortisol dehydrogenase (in vitro). This chain is Hydroxysteroid 11-beta-dehydrogenase 1-like protein (HSD11B1L), found in Homo sapiens (Human).